Reading from the N-terminus, the 613-residue chain is Phosphoinositide phospholipase C 6 (613 aa).

Positions glutamine 137 to lysine 281 constitute a PI-PLC X-box domain. Active-site residues include histidine 152 and histidine 198. The segment at glutamate 288–lysine 349 is disordered. A PI-PLC Y-box domain is found at lysine 349–methionine 465. The region spanning lysine 466 to aspartate 595 is the C2 domain.

It depends on Ca(2+) as a cofactor. Expressed in leaves, flowers and siliques, but not in roots.

It localises to the cell membrane. It catalyses the reaction a 1,2-diacyl-sn-glycero-3-phospho-(1D-myo-inositol-4,5-bisphosphate) + H2O = 1D-myo-inositol 1,4,5-trisphosphate + a 1,2-diacyl-sn-glycerol + H(+). The production of the second messenger molecules diacylglycerol (DAG) and inositol 1,4,5-trisphosphate (IP3) is mediated by activated phosphatidylinositol-specific phospholipase C enzymes. In Arabidopsis thaliana (Mouse-ear cress), this protein is Phosphoinositide phospholipase C 6 (PLC6).